We begin with the raw amino-acid sequence, 569 residues long: Beta-galactoside-specific lectin 3 (569 aa).

The signal sequence occupies residues 1 to 33 (MNAVMDSRGAWVSCFLILGLVFGATVKAETKFS). The active site involves Glu198. 3 cysteine pairs are disulfide-bonded: Cys280/Cys311, Cys327/Cys346, and Cys370/Cys387. Positions 288-307 (EVRYWPLVIRPVLENSGAVD) are cleaved as a propeptide — connecting peptide. In terms of domain architecture, Ricin B-type lectin 1 spans 314–441 (SEPTVRIVGR…YSLGQGWLAG (128 aa)). Residue 329-331 (DVR) coordinates D-galactose. N-linked (GlcNAc...) asparagine glycosylation is found at Asn402 and Asn442. In terms of domain architecture, Ricin B-type lectin 2 spans 445–568 (APREVTIYGF…GNPNQMWLPV (124 aa)). Cystine bridges form between Cys458–Cys471 and Cys497–Cys514. 541–543 (DVA) is a D-galactose binding site.

This sequence belongs to the ribosome-inactivating protein family. Type 2 RIP subfamily. In terms of assembly, disulfide-linked dimer of A and B chains.

The enzyme catalyses Endohydrolysis of the N-glycosidic bond at one specific adenosine on the 28S rRNA.. Functionally, the A chain is responsible for inhibiting protein synthesis through the catalytic inactivation of 60S ribosomal subunits by removing adenine from position 4,324 of 28S rRNA. The B chain binds to cell receptors and probably facilitates the entry into the cell of the A chain; B chains are also responsible for cell agglutination (lectin activity). Inhibits growth of the human tumor cell line Molt4. In Viscum album (European mistletoe), this protein is Beta-galactoside-specific lectin 3.